A 178-amino-acid chain; its full sequence is Protein GrpE (178 aa).

Positions 1–11 (MSENQNPPPSP) are enriched in pro residues. A disordered region spans residues 1–23 (MSENQNPPPSPEEIEAAMSANAA).

The protein belongs to the GrpE family. As to quaternary structure, homodimer.

It is found in the cytoplasm. Its function is as follows. Participates actively in the response to hyperosmotic and heat shock by preventing the aggregation of stress-denatured proteins, in association with DnaK and GrpE. It is the nucleotide exchange factor for DnaK and may function as a thermosensor. Unfolded proteins bind initially to DnaJ; upon interaction with the DnaJ-bound protein, DnaK hydrolyzes its bound ATP, resulting in the formation of a stable complex. GrpE releases ADP from DnaK; ATP binding to DnaK triggers the release of the substrate protein, thus completing the reaction cycle. Several rounds of ATP-dependent interactions between DnaJ, DnaK and GrpE are required for fully efficient folding. This Acidovorax sp. (strain JS42) protein is Protein GrpE.